The following is a 235-amino-acid chain: Serine protease SplA (235 aa).

Residues 1 to 35 form the signal peptide; sequence MNKNVMIKGLTALTILTSLGFAENISDQPHSIAKA. Catalysis depends on charge relay system residues histidine 74, aspartate 113, and serine 189.

Belongs to the peptidase S1B family.

The protein resides in the secreted. This Staphylococcus aureus protein is Serine protease SplA (splA).